The primary structure comprises 468 residues: Asparagine--tRNA ligase (468 aa).

It belongs to the class-II aminoacyl-tRNA synthetase family. In terms of assembly, homodimer.

The protein localises to the cytoplasm. It catalyses the reaction tRNA(Asn) + L-asparagine + ATP = L-asparaginyl-tRNA(Asn) + AMP + diphosphate + H(+). The chain is Asparagine--tRNA ligase from Parabacteroides distasonis (strain ATCC 8503 / DSM 20701 / CIP 104284 / JCM 5825 / NCTC 11152).